A 566-amino-acid polypeptide reads, in one-letter code: Urease subunit alpha (566 aa).

The Urease domain occupies 128–566; the sequence is GGVDTHIHFI…LPMAQRYFLF (439 aa). Residues H133, H135, and K216 each contribute to the Ni(2+) site. An N6-carboxylysine modification is found at K216. H218 contributes to the substrate binding site. Positions 245 and 271 each coordinate Ni(2+). Residue H319 is the Proton donor of the active site. D359 is a Ni(2+) binding site.

The protein belongs to the metallo-dependent hydrolases superfamily. Urease alpha subunit family. May form a heterohexamer of 3 UreC (alpha) and 3 UreAB (gamma/beta) subunits. May also form a heterotrimer of UreA (gamma), UreB (beta) and UreC (alpha) subunits. Three heterotrimers associate to form the active enzyme. Requires Ni cation as cofactor. In terms of processing, carboxylation allows a single lysine to coordinate two nickel ions.

It localises to the cytoplasm. The enzyme catalyses urea + 2 H2O + H(+) = hydrogencarbonate + 2 NH4(+). It participates in nitrogen metabolism; urea degradation; CO(2) and NH(3) from urea (urease route): step 1/1. In Pseudomonas savastanoi pv. phaseolicola (strain 1448A / Race 6) (Pseudomonas syringae pv. phaseolicola (strain 1448A / Race 6)), this protein is Urease subunit alpha.